A 206-amino-acid chain; its full sequence is Threonine efflux protein (206 aa).

A helical transmembrane segment spans residues Met-1 to Pro-21. Topologically, residues Asp-22–Leu-43 are periplasmic. A helical transmembrane segment spans residues Gly-44–Ile-64. Over Glu-65–Lys-66 the chain is Cytoplasmic. Residues Met-67–Tyr-87 form a helical membrane-spanning segment. Topologically, residues Gln-88–Arg-149 are periplasmic. A helical transmembrane segment spans residues Trp-150 to Leu-173. Residues Pro-174 to Arg-206 lie on the Cytoplasmic side of the membrane.

The protein belongs to the Rht family.

It localises to the cell inner membrane. In terms of biological role, conducts the efflux of threonine. The polypeptide is Threonine efflux protein (rhtC) (Salmonella typhi).